The sequence spans 401 residues: MKKMLFTSESVTEGHPDKICDQISDTILDAILEKEPEENKMNARCAVETLVTRGLVVVTGEVRTSAYIDVPTLVRNTILDIGYNRAKFGFDGETCAVITSIEEQSPDIALGVDRSFEVKSKEKEDPFEKIGAGDQGIMFGYATNETDAYMPLPILLAHRLAKRLADVRKSNTLDFLRPDGKTQVTVEYDENNNPVGVETVLISAQHSPDISRQELEEAIKEHVITPVIPENLVTKDTKILVNPTGRFVIGGPQADTGLTGRKIIVDTYGGWAPHGGGAFSGKDPTKVDRSATYMARYVAKNLVASGAADEVLIQLSYAIGVAQPVSINIDTKGTAKVDEEKIYKVVKEIFDFRPAAIISNLNLLQPIYQKTAAYGHFGRKDVEFPWERLDKVKELKAALGL.

His-15 is a binding site for ATP. Mg(2+) is bound at residue Asp-17. Residue Glu-48 participates in K(+) binding. L-methionine-binding residues include Glu-61 and Gln-104. The tract at residues 104–114 (QSPDIALGVDR) is flexible loop. ATP is bound by residues 179–181 (DGK), 246–247 (RF), Asp-255, 261–262 (RK), Ala-278, and Lys-282. Asp-255 lines the L-methionine pocket. Lys-286 provides a ligand contact to L-methionine.

It belongs to the AdoMet synthase family. Homotetramer; dimer of dimers. It depends on Mg(2+) as a cofactor. K(+) is required as a cofactor.

Its subcellular location is the cytoplasm. It catalyses the reaction L-methionine + ATP + H2O = S-adenosyl-L-methionine + phosphate + diphosphate. It participates in amino-acid biosynthesis; S-adenosyl-L-methionine biosynthesis; S-adenosyl-L-methionine from L-methionine: step 1/1. In terms of biological role, catalyzes the formation of S-adenosylmethionine (AdoMet) from methionine and ATP. The overall synthetic reaction is composed of two sequential steps, AdoMet formation and the subsequent tripolyphosphate hydrolysis which occurs prior to release of AdoMet from the enzyme. The sequence is that of S-adenosylmethionine synthase from Petrotoga mobilis (strain DSM 10674 / SJ95).